The sequence spans 105 residues: Tyrosine-protein phosphatase 12 (105 aa).

Residues 1–105 (WRMIWEKRVE…NLRRIVRTEF (105 aa)) enclose the Tyrosine-protein phosphatase domain. Asp-84 serves as a coordination point for substrate.

This sequence belongs to the protein-tyrosine phosphatase family.

It carries out the reaction O-phospho-L-tyrosyl-[protein] + H2O = L-tyrosyl-[protein] + phosphate. The protein is Tyrosine-protein phosphatase 12 (STY-12) of Styela plicata (Wrinkled sea squirt).